The sequence spans 300 residues: Jacalin-related lectin 33 (300 aa).

Residues 1 to 20 are disordered; sequence MAQKVEAGGGAGGASWDDGV. An N-acetylalanine modification is found at Ala2. Jacalin-type lectin domains follow at residues 2–146 and 154–297; these read AQKV…YFAT and AKKL…HVMP.

The protein belongs to the jacalin lectin family. Component of the PYK10 complex, at least composed of PYK10/BGLU23, BGLU21, BGLU22, JAL22, JAL23, PBP1/JAL30, PBP2/JAL31, JAL32, JAL33, JAL34, JAL35, GLL22 and GLL23.

In terms of biological role, sugar-binding protein showing significant affinity for (Glc alpha(1-4)Glc)(3) maltohexaose, (Glc alpha(1-6)Glc)(3) isomaltohexaose, Gal alpha(1-4)Gal beta(1-4)Glc, GalNAc alpha(1-3)(Fuc alpha(1-2)) and Gal beta(1-3)(Fuc alpha(1-4))GlcNAc beta(1-3)Gal beta(1-4)Glc. This is Jacalin-related lectin 33 (JAL33) from Arabidopsis thaliana (Mouse-ear cress).